A 408-amino-acid chain; its full sequence is Ubiquitin-associated domain-containing protein 1 (408 aa).

The region spanning 14-98 is the Ubiquitin-like domain; it reads LRLQVCTMEG…LLLIKKRAPP (85 aa). The tract at residues 100–119 is disordered; the sequence is LPKMADVSAEEKRKQEQKAP. Over residues 108–119 the composition is skewed to basic and acidic residues; it reads AEEKRKQEQKAP. The UBA 1 domain occupies 185 to 231; that stretch reads DEDEEDRVDEIALRQLTEMGFPESRAVKALRLNHMSVTQAMEWLIEH. The disordered stretch occupies residues 235-275; the sequence is PAVDAPLPGQTPSEAAAEAGASSAEATAGPSSEAGGEEAKD. Residues 245–268 show a composition bias toward low complexity; the sequence is TPSEAAAEAGASSAEATAGPSSEA. Residues 291–331 form the UBA 2 domain; the sequence is RPDPRAVIALMEMGFDEKEVVDALRVNNNQQNAACEWLLGD. The STI1 domain occupies 356 to 395; the sequence is NPVVQLGLTNPKTLLAFEDMLENPLNSTQWMNDPETGPVM.

Component of the KPC complex.

The protein resides in the cytoplasm. Its pathway is protein modification; protein ubiquitination. Its function is as follows. Non-catalytic component of the KPC complex, a E3 ubiquitin-protein ligase complex that mediates polyubiquitination of target proteins, such as CDKN1B and NFKB1. Within the KPC complex, UBAC1 acts as an adapter that promotes the transfer of target proteins that have been polyubiquitinated by RNF123/KPC1 to the 26S proteasome. This Gallus gallus (Chicken) protein is Ubiquitin-associated domain-containing protein 1 (UBAC1).